The chain runs to 181 residues: Crossover junction endodeoxyribonuclease RuvC (181 aa).

Residues aspartate 7, glutamate 67, and aspartate 139 contribute to the active site. Mg(2+)-binding residues include aspartate 7, glutamate 67, and aspartate 139.

The protein belongs to the RuvC family. As to quaternary structure, homodimer which binds Holliday junction (HJ) DNA. The HJ becomes 2-fold symmetrical on binding to RuvC with unstacked arms; it has a different conformation from HJ DNA in complex with RuvA. In the full resolvosome a probable DNA-RuvA(4)-RuvB(12)-RuvC(2) complex forms which resolves the HJ. Mg(2+) is required as a cofactor.

It localises to the cytoplasm. The catalysed reaction is Endonucleolytic cleavage at a junction such as a reciprocal single-stranded crossover between two homologous DNA duplexes (Holliday junction).. Functionally, the RuvA-RuvB-RuvC complex processes Holliday junction (HJ) DNA during genetic recombination and DNA repair. Endonuclease that resolves HJ intermediates. Cleaves cruciform DNA by making single-stranded nicks across the HJ at symmetrical positions within the homologous arms, yielding a 5'-phosphate and a 3'-hydroxyl group; requires a central core of homology in the junction. The consensus cleavage sequence is 5'-(A/T)TT(C/G)-3'. Cleavage occurs on the 3'-side of the TT dinucleotide at the point of strand exchange. HJ branch migration catalyzed by RuvA-RuvB allows RuvC to scan DNA until it finds its consensus sequence, where it cleaves and resolves the cruciform DNA. In Ralstonia nicotianae (strain ATCC BAA-1114 / GMI1000) (Ralstonia solanacearum), this protein is Crossover junction endodeoxyribonuclease RuvC.